We begin with the raw amino-acid sequence, 315 residues long: DNA-directed RNA polymerase subunit alpha (315 aa).

An alpha N-terminal domain (alpha-NTD) region spans residues 1 to 229; that stretch reads MLDSKLKAPV…EHLTYFSNPQ (229 aa). The interval 247–315 is alpha C-terminal domain (alpha-CTD); that stretch reads EQEEELDLPL…LEKKGFTLKE (69 aa).

It belongs to the RNA polymerase alpha chain family. As to quaternary structure, homodimer. The RNAP catalytic core consists of 2 alpha, 1 beta, 1 beta' and 1 omega subunit. When a sigma factor is associated with the core the holoenzyme is formed, which can initiate transcription.

It catalyses the reaction RNA(n) + a ribonucleoside 5'-triphosphate = RNA(n+1) + diphosphate. Its function is as follows. DNA-dependent RNA polymerase catalyzes the transcription of DNA into RNA using the four ribonucleoside triphosphates as substrates. This is DNA-directed RNA polymerase subunit alpha from Thermus thermophilus (strain ATCC BAA-163 / DSM 7039 / HB27).